The primary structure comprises 136 residues: Large ribosomal subunit protein uL16c (136 aa).

The protein belongs to the universal ribosomal protein uL16 family. Part of the 50S ribosomal subunit.

The protein resides in the plastid. It localises to the chloroplast. The sequence is that of Large ribosomal subunit protein uL16c from Saccharum hybrid (Sugarcane).